The chain runs to 508 residues: Hydroxymethylglutaryl-CoA synthase, mitochondrial (508 aa).

The N-terminal 37 residues, 1–37 (MQRLLTPVRQVLQVKRVMQEASLLPARLLPAAHPSFS), are a transit peptide targeting the mitochondrion. Position 52 is an N6-succinyllysine (Lys-52). Residues Glu-80 and Ala-81 each coordinate (3S)-3-hydroxy-3-methylglutaryl-CoA. Residue Glu-132 is the Proton donor/acceptor of the active site. (3S)-3-hydroxy-3-methylglutaryl-CoA-binding residues include Cys-166, Asn-204, and Thr-208. Residue Cys-166 is the Acyl-thioester intermediate of the active site. Lys-243 carries the N6-acetyllysine modification. Lys-256 carries the N6-acetyllysine; alternate modification. Lys-256 carries the N6-succinyllysine; alternate modification. (3S)-3-hydroxy-3-methylglutaryl-CoA-binding residues include Ser-258 and His-301. His-301 (proton donor/acceptor) is an active-site residue. Lys-306 carries the N6-acetyllysine modification. Lys-310 provides a ligand contact to (3S)-3-hydroxy-3-methylglutaryl-CoA. An N6-acetyllysine; alternate modification is found at Lys-310. An N6-succinyllysine; alternate modification is found at Lys-310. At Lys-333 the chain carries N6-succinyllysine. 4 positions are modified to N6-acetyllysine; alternate: Lys-342, Lys-350, Lys-354, and Lys-358. Lys-342, Lys-350, Lys-354, and Lys-358 each carry N6-succinyllysine; alternate. Residues Asn-380 and Ser-414 each coordinate (3S)-3-hydroxy-3-methylglutaryl-CoA. The residue at position 433 (Ser-433) is a Phosphoserine. Lys-437 carries the post-translational modification N6-acetyllysine. Ser-440 bears the Phosphoserine mark. Lys-447 is modified (N6-acetyllysine; alternate). Lys-447 carries the post-translational modification N6-succinyllysine; alternate. Ser-456 is subject to Phosphoserine. Lys-473 carries the post-translational modification N6-acetyllysine; alternate. The residue at position 473 (Lys-473) is an N6-succinyllysine; alternate. Ser-477 carries the phosphoserine modification.

Belongs to the thiolase-like superfamily. HMG-CoA synthase family. Homodimer. Post-translationally, succinylated. Desuccinylated by SIRT5. Succinylation, at least at Lys-310, inhibits the enzymatic activity.

The protein localises to the mitochondrion. The catalysed reaction is acetoacetyl-CoA + acetyl-CoA + H2O = (3S)-3-hydroxy-3-methylglutaryl-CoA + CoA + H(+). The protein operates within metabolic intermediate biosynthesis; (R)-mevalonate biosynthesis; (R)-mevalonate from acetyl-CoA: step 2/3. Functionally, catalyzes the first irreversible step in ketogenesis, condensing acetyl-CoA to acetoacetyl-CoA to form HMG-CoA, which is converted by HMG-CoA reductase (HMGCR) into mevalonate. The sequence is that of Hydroxymethylglutaryl-CoA synthase, mitochondrial (HMGCS2) from Bos taurus (Bovine).